The chain runs to 449 residues: RNA binding protein fox-1 homolog 2 (449 aa).

A compositionally biased stretch (low complexity) spans 1 to 21; it reads MAEGGQAQQQPPQLGPGAAAR. Residues 1–186 form a disordered region; that stretch reads MAEGGQAQQQ…STPKRLHVSN (186 aa). 2 stretches are compositionally biased toward polar residues: residues 77–86 and 118–138; these read QGNQEPTTTP and YAGQTSEHNLTLYGSTQPHGE. The span at 139–176 shows a compositional bias: low complexity; it reads QSSNSPSNQNGSLTQTEGGAQTDGQQSQTQSSENSESK. An RRM domain is found at 180–256; it reads KRLHVSNIPF…RKIEVNNATA (77 aa). 4 positions are modified to omega-N-methylarginine: arginine 236, glycine 241, tyrosine 268, and lysine 273. An asymmetric dimethylarginine mark is found at glutamate 285 and proline 317. An omega-N-methylarginine mark is found at leucine 318, leucine 323, alanine 336, arginine 340, and glycine 341. 2 positions are modified to asymmetric dimethylarginine: arginine 356 and arginine 388. Arginine 440 and arginine 445 each carry asymmetric dimethylarginine; alternate. Omega-N-methylarginine; alternate occurs at positions 440 and 445.

As to quaternary structure, interacts with ER-alpha N-terminal activation domain. Interacts with RBPMS; the interaction allows cooperative assembly of stable cell-specific alternative splicing regulatory complexes. Detected in brain neurons (at protein level). Detected in heart, brain, embryo, lung, liver, kidney and ovary.

The protein localises to the nucleus. It localises to the cytoplasm. In terms of biological role, RNA-binding protein that regulates alternative splicing events by binding to 5'-UGCAUGU-3' elements. Prevents binding of U2AF2 to the 3'-splice site. Regulates alternative splicing of tissue-specific exons and of differentially spliced exons during erythropoiesis. Seems to act as a coregulatory factor of ER-alpha. Together with RNA binding proteins RBPMS and MBNL1/2, activates vascular smooth muscle cells alternative splicing events. The protein is RNA binding protein fox-1 homolog 2 (Rbfox2) of Mus musculus (Mouse).